We begin with the raw amino-acid sequence, 384 residues long: Tetraacyldisaccharide 4'-kinase (384 aa).

72–79 (TAGGTGKT) contacts ATP.

The protein belongs to the LpxK family.

The enzyme catalyses a lipid A disaccharide + ATP = a lipid IVA + ADP + H(+). It participates in glycolipid biosynthesis; lipid IV(A) biosynthesis; lipid IV(A) from (3R)-3-hydroxytetradecanoyl-[acyl-carrier-protein] and UDP-N-acetyl-alpha-D-glucosamine: step 6/6. Its function is as follows. Transfers the gamma-phosphate of ATP to the 4'-position of a tetraacyldisaccharide 1-phosphate intermediate (termed DS-1-P) to form tetraacyldisaccharide 1,4'-bis-phosphate (lipid IVA). The sequence is that of Tetraacyldisaccharide 4'-kinase from Halothermothrix orenii (strain H 168 / OCM 544 / DSM 9562).